The primary structure comprises 323 residues: 4-hydroxy-3-methylbut-2-enyl diphosphate reductase (323 aa).

A [4Fe-4S] cluster-binding site is contributed by C21. Positions 50 and 83 each coordinate (2E)-4-hydroxy-3-methylbut-2-enyl diphosphate. Residues H50 and H83 each coordinate dimethylallyl diphosphate. Residues H50 and H83 each contribute to the isopentenyl diphosphate site. C105 serves as a coordination point for [4Fe-4S] cluster. A (2E)-4-hydroxy-3-methylbut-2-enyl diphosphate-binding site is contributed by H133. H133 contacts dimethylallyl diphosphate. H133 is an isopentenyl diphosphate binding site. E135 (proton donor) is an active-site residue. (2E)-4-hydroxy-3-methylbut-2-enyl diphosphate is bound at residue T173. A [4Fe-4S] cluster-binding site is contributed by C203. (2E)-4-hydroxy-3-methylbut-2-enyl diphosphate-binding residues include S231, S232, N233, and S276. Positions 231, 232, 233, and 276 each coordinate dimethylallyl diphosphate. Isopentenyl diphosphate contacts are provided by S231, S232, N233, and S276.

It belongs to the IspH family. The cofactor is [4Fe-4S] cluster.

It catalyses the reaction isopentenyl diphosphate + 2 oxidized [2Fe-2S]-[ferredoxin] + H2O = (2E)-4-hydroxy-3-methylbut-2-enyl diphosphate + 2 reduced [2Fe-2S]-[ferredoxin] + 2 H(+). The catalysed reaction is dimethylallyl diphosphate + 2 oxidized [2Fe-2S]-[ferredoxin] + H2O = (2E)-4-hydroxy-3-methylbut-2-enyl diphosphate + 2 reduced [2Fe-2S]-[ferredoxin] + 2 H(+). It participates in isoprenoid biosynthesis; dimethylallyl diphosphate biosynthesis; dimethylallyl diphosphate from (2E)-4-hydroxy-3-methylbutenyl diphosphate: step 1/1. Its pathway is isoprenoid biosynthesis; isopentenyl diphosphate biosynthesis via DXP pathway; isopentenyl diphosphate from 1-deoxy-D-xylulose 5-phosphate: step 6/6. Catalyzes the conversion of 1-hydroxy-2-methyl-2-(E)-butenyl 4-diphosphate (HMBPP) into a mixture of isopentenyl diphosphate (IPP) and dimethylallyl diphosphate (DMAPP). Acts in the terminal step of the DOXP/MEP pathway for isoprenoid precursor biosynthesis. This chain is 4-hydroxy-3-methylbut-2-enyl diphosphate reductase, found in Cutibacterium acnes (strain DSM 16379 / KPA171202) (Propionibacterium acnes).